Here is a 320-residue protein sequence, read N- to C-terminus: Methionyl-tRNA formyltransferase (320 aa).

114–117 is a (6S)-5,6,7,8-tetrahydrofolate binding site; it reads SLLP.

This sequence belongs to the Fmt family.

It carries out the reaction L-methionyl-tRNA(fMet) + (6R)-10-formyltetrahydrofolate = N-formyl-L-methionyl-tRNA(fMet) + (6S)-5,6,7,8-tetrahydrofolate + H(+). Attaches a formyl group to the free amino group of methionyl-tRNA(fMet). The formyl group appears to play a dual role in the initiator identity of N-formylmethionyl-tRNA by promoting its recognition by IF2 and preventing the misappropriation of this tRNA by the elongation apparatus. In Acinetobacter baumannii (strain ACICU), this protein is Methionyl-tRNA formyltransferase.